An 82-amino-acid chain; its full sequence is Metallothionein-like protein 2A (82 aa).

The protein belongs to the metallothionein superfamily. Type 15 family. Expressed in stems, leaves, rachis, inflorescences and seeds.

Its function is as follows. Metallothioneins have a high content of cysteine residues that bind various heavy metals. In Oryza sativa subsp. japonica (Rice), this protein is Metallothionein-like protein 2A (MT2A).